Consider the following 214-residue polypeptide: MRIMLLGAPGAGKGTQAQFIMEKYGVPQISTGDMLRAAVKAGTPLGLEAKKVMDAGQLVSDELIIGLVKERIAQDDCAKGFLLDGFPRTIPQADAMAASGIDIDHVIEIDVPDEEIVKRMSGRRVHPGSGRVYHIVYNPPKVEGKDDVTGEDLAIRPDDEESTVRKRLGIYHEQTKPLVEYYGKVAEQGKLTYNKFDGTQSVGAVSEAIVKAIG.

10–15 lines the ATP pocket; that stretch reads GAGKGT. Residues 30–59 form an NMP region; the sequence is STGDMLRAAVKAGTPLGLEAKKVMDAGQLV. Residues threonine 31, arginine 36, 57–59, 85–88, and glutamine 92 each bind AMP; these read QLV and GFPR. Positions 122–159 are LID; that stretch reads GRRVHPGSGRVYHIVYNPPKVEGKDDVTGEDLAIRPDD. ATP-binding positions include arginine 123 and 132–133; that span reads VY. AMP is bound by residues arginine 156 and arginine 167. An ATP-binding site is contributed by glutamine 200.

This sequence belongs to the adenylate kinase family. As to quaternary structure, monomer.

Its subcellular location is the cytoplasm. It carries out the reaction AMP + ATP = 2 ADP. It participates in purine metabolism; AMP biosynthesis via salvage pathway; AMP from ADP: step 1/1. Functionally, catalyzes the reversible transfer of the terminal phosphate group between ATP and AMP. Plays an important role in cellular energy homeostasis and in adenine nucleotide metabolism. The polypeptide is Adenylate kinase (Shewanella loihica (strain ATCC BAA-1088 / PV-4)).